Consider the following 246-residue polypeptide: Allergin-1 (246 aa).

An N-terminal signal peptide occupies residues 1 to 33 (MGDGDSPMCLSAVSFKGIRCWLDKLLLWALTIS). Topologically, residues 34–150 (ITLQNAAVDC…DESCPSCRLS (117 aa)) are extracellular. The Ig-like C2-type domain occupies 52–131 (PSPNLNSSMN…VNVSNLMKYS (80 aa)). N-linked (GlcNAc...) asparagine glycosylation occurs at N68. C73 and C120 are disulfide-bonded. Residues 151–171 (LLLPGLLLGILVIVLVLAYLI) traverse the membrane as a helical segment. The Cytoplasmic segment spans residues 172–246 (HLKYKKGKKT…ADYIYSELTH (75 aa)). 2 consecutive short sequence motifs (ITIM motif) follow at residues 214 to 219 (IHYATP) and 239 to 244 (YIYSEL). Y216 and Y241 each carry phosphotyrosine.

Monomer. Interacts (tyrosine-phosphorylated) with PTPN6, PTPN11 and INPP5D. Post-translationally, N-glycosylated. Expressed in myeloid cells (dendritic cells, macrophages and neutrophils but not in T-cells, B-cells or natural killer cells) and mast cells (at protein level).

The protein localises to the cell membrane. Its subcellular location is the secreted. In terms of biological role, immunoglobulin-like receptor which plays an inhibitory role in degranulation of mast cells. Negatively regulates IgE-mediated mast cell activation and suppresses the type I immediate hypersensitivity reaction. This chain is Allergin-1 (Milr1), found in Mus musculus (Mouse).